We begin with the raw amino-acid sequence, 296 residues long: Enoyl-CoA hydratase domain-containing protein 2, mitochondrial (296 aa).

The N-terminal 17 residues, Met1–Phe17, are a transit peptide targeting the mitochondrion. At Lys101 the chain carries N6-acetyllysine; alternate. Lys101 is modified (N6-succinyllysine; alternate).

Belongs to the enoyl-CoA hydratase/isomerase family.

It localises to the mitochondrion. The polypeptide is Enoyl-CoA hydratase domain-containing protein 2, mitochondrial (Echdc2) (Mus musculus (Mouse)).